The primary structure comprises 638 residues: XK-related protein 6 (638 aa).

Disordered regions lie at residues 24–43 (VGSG…GGDG) and 82–117 (RSAA…PASP). Gly residues predominate over residues 33–43 (PGGGGCGGGDG). Transmembrane regions (helical) follow at residues 127 to 147 (LWIV…LWLA), 158 to 178 (CFGL…SLSF), 315 to 335 (TLPC…LASY), 369 to 389 (VISF…FVVV), 410 to 430 (WEEI…WFNV), 439 to 459 (MFAY…LWYF), and 470 to 490 (AVPA…LMLL).

It belongs to the XK family.

Its subcellular location is the cell membrane. The sequence is that of XK-related protein 6 from Mus musculus (Mouse).